The following is a 158-amino-acid chain: Transcription elongation factor GreA (158 aa).

Positions 3–75 form a coiled coil; sequence TEKTYPMTQE…TQLENMIRNA (73 aa).

The protein belongs to the GreA/GreB family.

Functionally, necessary for efficient RNA polymerase transcription elongation past template-encoded arresting sites. The arresting sites in DNA have the property of trapping a certain fraction of elongating RNA polymerases that pass through, resulting in locked ternary complexes. Cleavage of the nascent transcript by cleavage factors such as GreA or GreB allows the resumption of elongation from the new 3'terminus. GreA releases sequences of 2 to 3 nucleotides. The polypeptide is Transcription elongation factor GreA (Bacillus cereus (strain ATCC 14579 / DSM 31 / CCUG 7414 / JCM 2152 / NBRC 15305 / NCIMB 9373 / NCTC 2599 / NRRL B-3711)).